A 96-amino-acid polypeptide reads, in one-letter code: Small ribosomal subunit protein bS20 (96 aa).

The disordered stretch occupies residues 1–27 (MAKQEVAAKKVKRPTALKRDLQNKKKR).

Belongs to the bacterial ribosomal protein bS20 family.

Binds directly to 16S ribosomal RNA. The sequence is that of Small ribosomal subunit protein bS20 from Protochlamydia amoebophila (strain UWE25).